Consider the following 154-residue polypeptide: Cindoxin (154 aa).

The Flavodoxin-like domain occupies 3-145 (ALILYGTETG…TAEEWAREIL (143 aa)). Residues 9 to 13 (TETGN) and 89 to 120 (VFGLGDSYYTTFNQAGATAATILASLGGTQVG) each bind FMN.

Requires FMN as cofactor.

Involved in the degradation of cineol (eucalyptol). The FMN protein, cindoxin, shuttles electrons between the FAD-containing cindoxin reductase (CinB) and 1,8-cineole 2-endo-monooxygenase (CinA). The polypeptide is Cindoxin (cinC) (Citrobacter braakii).